The following is a 238-amino-acid chain: Probable 2-phosphosulfolactate phosphatase (238 aa).

Belongs to the ComB family. Requires Mg(2+) as cofactor.

It catalyses the reaction (2R)-O-phospho-3-sulfolactate + H2O = (2R)-3-sulfolactate + phosphate. The polypeptide is Probable 2-phosphosulfolactate phosphatase (Clostridium botulinum (strain Alaska E43 / Type E3)).